The sequence spans 358 residues: Ion-translocating oxidoreductase complex subunit D (358 aa).

4 helical membrane passes run 19–39, 41–61, 79–99, and 125–145; these read IMLW…YYFG, GVLL…FIAI, LTAL…VIII, and IGYV…MPPI. Thr-186 carries the post-translational modification FMN phosphoryl threonine. The next 5 helical transmembrane spans lie at 220 to 240, 248 to 268, 271 to 291, 297 to 317, and 321 to 341; these read FAQG…FLIL, IPVA…FTGF, LSAI…FIAT, SITP…VYLI, and GNYP…VPLI.

This sequence belongs to the NqrB/RnfD family. In terms of assembly, the complex is composed of six subunits: RnfA, RnfB, RnfC, RnfD, RnfE and RnfG. Requires FMN as cofactor.

The protein resides in the cell inner membrane. Its function is as follows. Part of a membrane-bound complex that couples electron transfer with translocation of ions across the membrane. This is Ion-translocating oxidoreductase complex subunit D from Haemophilus influenzae (strain PittEE).